Consider the following 525-residue polypeptide: GMP synthase [glutamine-hydrolyzing] (525 aa).

The region spanning 9–207 (RILILDFGSQ…VLDICQCEAL (199 aa)) is the Glutamine amidotransferase type-1 domain. Cysteine 86 functions as the Nucleophile in the catalytic mechanism. Catalysis depends on residues histidine 181 and glutamate 183. The GMPS ATP-PPase domain maps to 208–400 (WTPAKIIDDA…LGLPYNMLYR (193 aa)). 235–241 (SGGVDSS) contacts ATP.

In terms of assembly, homodimer.

The enzyme catalyses XMP + L-glutamine + ATP + H2O = GMP + L-glutamate + AMP + diphosphate + 2 H(+). It functions in the pathway purine metabolism; GMP biosynthesis; GMP from XMP (L-Gln route): step 1/1. In terms of biological role, catalyzes the synthesis of GMP from XMP. The sequence is that of GMP synthase [glutamine-hydrolyzing] from Pectobacterium atrosepticum (strain SCRI 1043 / ATCC BAA-672) (Erwinia carotovora subsp. atroseptica).